The primary structure comprises 186 residues: uncharacterized protein (186 aa).

A signal peptide spans 1–21 (MKFFLGSALFLILTFINLVRA). Topologically, residues 22 to 142 (EFEFITPAED…AFSVNPIDKK (121 aa)) are extracellular. N-linked (GlcNAc...) asparagine glycans are attached at residues Asn-62, Asn-75, Asn-93, and Asn-104. The chain crosses the membrane as a helical span at residues 143-163 (LAIGLSVGLSCCILIVLFLHF). Over 164–186 (ATRRERRILKNEKELEMSSYRKH) the chain is Cytoplasmic.

The protein resides in the membrane. This is an uncharacterized protein from Schizosaccharomyces pombe (strain 972 / ATCC 24843) (Fission yeast).